A 500-amino-acid chain; its full sequence is MAKSSRENGPREPAAGGSLSGTRESLAQGPDAATADELSSLGSDSEANGFAERRIDKFGFIVGSQGAEGALEEVPLEVLRQRESKWLDMLNNWDKWMAKKHKKIRLRCQKGIPPSLRGRAWQYLSGGKVKLQQNPGKFDELDMSPGDPKWLDVIERDLHRQFPFHEMFVSRGGHGQQDLFRVLKAYTLYRPEEGYCQAQAPIAAVLLMHMPAEQAFWCLVQVCEKYLPGYYSEKLEAIQLDGEILFSLLQKVSPVAHKHLSRQKIDPLLYMTEWFMCAFARTLPWSSVLRVWDMFFCEGVKIIFRVGLVLLKHALGSPEKLKACQGQYETIEQLRSLSPKIMQEAFLVQEVIELPVTERQIEREHLIQLRRWQETRGELECRSLPRMHGAKAILDAEPGPRPALQPSPSIRLPPDAALLSSKAKPHKQAQKEQKRTKTSAQLDKSPGLSQATVVTAAGDACPPQGVSPKDPVPQDPTPQNLACHHSQESLTSQESEDTYL.

Positions 1–10 (MAKSSRENGP) are enriched in basic and acidic residues. Positions 1–45 (MAKSSRENGPREPAAGGSLSGTRESLAQGPDAATADELSSLGSDS) are disordered. A phosphoserine mark is found at serine 39, serine 40, and serine 45. The 189-residue stretch at 111 to 299 (GIPPSLRGRA…RVWDMFFCEG (189 aa)) folds into the Rab-GAP TBC domain. 2 disordered regions span residues 396–415 (AEPGPRPALQPSPSIRLPPD) and 420–500 (SSKA…DTYL). Residue serine 407 is modified to Phosphoserine. Positions 438–453 (TSAQLDKSPGLSQATV) are enriched in polar residues. Threonine 477 carries the phosphothreonine modification. The segment at 497–500 (DTYL) is binding to the PDZ domain of EBP50.

As to quaternary structure, binds to the first PDZ domain of NHERF1 and NHERF2. Expressed in most tissues, except for skeletal muscle.

It localises to the cell projection. The protein localises to the microvillus. Functionally, GTPase-activating protein (GAP) specific for RAB27A and RAB35. Does not show GAP activity for RAB2A, RAB3A and RAB4A. In Mus musculus (Mouse), this protein is TBC1 domain family member 10A (Tbc1d10a).